A 429-amino-acid chain; its full sequence is MAKIVDIKGREVLDSRGNPTVEADVILEGGIVGSACAPSGASTGSREALELRDGDKSRYLGKGVLKAVANINGPIRDLLLGKDATDQQALDRAMIELDGTENKAKLGANAILAVSLAAAKAAAQAKGVPLYAHIADLNGTPGVYSMPVPMMNIINGGEHADNNVDIQEFMVQPVGAKNFADALRMGAEIFHHLKAVLKARGLNTAVGDEGGFAPNLASNEDALAAIAEAVANAGYKLGDDVTLALDCASSEFFKDGKYDLEGEGKVFDAAGFADYLAGLTQRYPIISIEDGMDESDWAGWKVLTDKIGAKVQLVGDDLFVTNTKILKRGIDEKIGNSILIKFNQIGSLTETLEAIQMAKAAGFTAVISHRSGETEDSTIADLAVGTAAGQIKTGSLCRSDRVSKYNQLLRIEEQLGGKAPYKGRAEFRG.

Gln167 is a binding site for (2R)-2-phosphoglycerate. Glu209 acts as the Proton donor in catalysis. Mg(2+) contacts are provided by Asp246, Glu289, and Asp316. The (2R)-2-phosphoglycerate site is built by Lys341, Arg370, Ser371, and Lys392. The Proton acceptor role is filled by Lys341.

Belongs to the enolase family. In terms of assembly, component of the RNA degradosome, a multiprotein complex involved in RNA processing and mRNA degradation. It depends on Mg(2+) as a cofactor.

Its subcellular location is the cytoplasm. The protein resides in the secreted. The protein localises to the cell surface. The enzyme catalyses (2R)-2-phosphoglycerate = phosphoenolpyruvate + H2O. It functions in the pathway carbohydrate degradation; glycolysis; pyruvate from D-glyceraldehyde 3-phosphate: step 4/5. Its function is as follows. Catalyzes the reversible conversion of 2-phosphoglycerate (2-PG) into phosphoenolpyruvate (PEP). It is essential for the degradation of carbohydrates via glycolysis. The polypeptide is Enolase (Ectopseudomonas mendocina (strain ymp) (Pseudomonas mendocina)).